A 482-amino-acid chain; its full sequence is Glutamate--tRNA ligase 2 (482 aa).

Positions 16 to 26 (PSPTGYLHLGN) match the 'HIGH' region motif. Residues Cys-113, Cys-115, Cys-140, and His-142 each contribute to the Zn(2+) site. The short motif at 257-261 (PLSKR) is the 'KMSKS' region element. Residue Lys-260 coordinates ATP.

It belongs to the class-I aminoacyl-tRNA synthetase family. Glutamate--tRNA ligase type 1 subfamily. In terms of assembly, monomer. Zn(2+) serves as cofactor.

The protein localises to the cytoplasm. The enzyme catalyses tRNA(Glu) + L-glutamate + ATP = L-glutamyl-tRNA(Glu) + AMP + diphosphate. Functionally, catalyzes the attachment of glutamate to tRNA(Glu) in a two-step reaction: glutamate is first activated by ATP to form Glu-AMP and then transferred to the acceptor end of tRNA(Glu). This chain is Glutamate--tRNA ligase 2, found in Acidithiobacillus ferrooxidans (strain ATCC 53993 / BNL-5-31) (Leptospirillum ferrooxidans (ATCC 53993)).